The primary structure comprises 129 residues: Phosphoribosyl-AMP cyclohydrolase (129 aa).

Position 85 (aspartate 85) interacts with Mg(2+). Position 86 (cysteine 86) interacts with Zn(2+). Residues aspartate 87 and aspartate 89 each coordinate Mg(2+). Residues cysteine 102 and cysteine 109 each coordinate Zn(2+).

Belongs to the PRA-CH family. As to quaternary structure, homodimer. Requires Mg(2+) as cofactor. Zn(2+) is required as a cofactor.

Its subcellular location is the cytoplasm. It catalyses the reaction 1-(5-phospho-beta-D-ribosyl)-5'-AMP + H2O = 1-(5-phospho-beta-D-ribosyl)-5-[(5-phospho-beta-D-ribosylamino)methylideneamino]imidazole-4-carboxamide. Its pathway is amino-acid biosynthesis; L-histidine biosynthesis; L-histidine from 5-phospho-alpha-D-ribose 1-diphosphate: step 3/9. Functionally, catalyzes the hydrolysis of the adenine ring of phosphoribosyl-AMP. The sequence is that of Phosphoribosyl-AMP cyclohydrolase from Methanococcus maripaludis (strain C7 / ATCC BAA-1331).